Consider the following 411-residue polypeptide: Tyrosine--tRNA ligase (411 aa).

Tyrosine 34 is a binding site for L-tyrosine. Positions 39–48 (CTATSLHIGS) match the 'HIGH' region motif. Positions 171 and 175 each coordinate L-tyrosine. Residues 231 to 235 (KMGKT) carry the 'KMSKS' region motif. Residue lysine 234 coordinates ATP. The S4 RNA-binding domain occupies 345-411 (ISAYKLFYNV…GKKRHILVKV (67 aa)).

It belongs to the class-I aminoacyl-tRNA synthetase family. TyrS type 1 subfamily. Homodimer.

The protein resides in the cytoplasm. It catalyses the reaction tRNA(Tyr) + L-tyrosine + ATP = L-tyrosyl-tRNA(Tyr) + AMP + diphosphate + H(+). Catalyzes the attachment of tyrosine to tRNA(Tyr) in a two-step reaction: tyrosine is first activated by ATP to form Tyr-AMP and then transferred to the acceptor end of tRNA(Tyr). This Rickettsia typhi (strain ATCC VR-144 / Wilmington) protein is Tyrosine--tRNA ligase.